Consider the following 122-residue polypeptide: Acidic phospholipase A2 (122 aa).

7 disulfide bridges follow: Cys-26/Cys-115, Cys-28/Cys-44, Cys-43/Cys-95, Cys-49/Cys-122, Cys-50/Cys-88, Cys-57/Cys-81, and Cys-75/Cys-86. 3 residues coordinate Ca(2+): Tyr-27, Gly-29, and Gly-31. Residue His-47 is part of the active site. Asp-48 is a binding site for Ca(2+). The active site involves Asp-89.

May form tetramers. Requires Ca(2+) as cofactor. As to expression, expressed by the venom gland.

It localises to the secreted. It carries out the reaction a 1,2-diacyl-sn-glycero-3-phosphocholine + H2O = a 1-acyl-sn-glycero-3-phosphocholine + a fatty acid + H(+). In terms of biological role, PLA2 catalyzes the calcium-dependent hydrolysis of the 2-acyl groups in 3-sn-phosphoglycerides. In vivo, is non-lethal to mice when intravenously injected up to a concentration of 30 ug, however does show significant edematogenic activity at the injection site. The sequence is that of Acidic phospholipase A2 from Lachesis acrochorda (Chocoan bushmaster).